Here is a 274-residue protein sequence, read N- to C-terminus: Thiamine kinase (274 aa).

It belongs to the thiamine kinase family.

It catalyses the reaction thiamine + ATP = thiamine phosphate + ADP + H(+). It functions in the pathway cofactor biosynthesis; thiamine diphosphate biosynthesis; thiamine phosphate from thiamine: step 1/1. In terms of biological role, catalyzes the ATP-dependent phosphorylation of thiamine to thiamine phosphate. Is involved in thiamine salvage. The chain is Thiamine kinase from Salmonella paratyphi A (strain ATCC 9150 / SARB42).